The chain runs to 395 residues: S-adenosylmethionine synthase (395 aa).

H14 provides a ligand contact to ATP. D16 provides a ligand contact to Mg(2+). Residue E42 participates in K(+) binding. E55 and Q98 together coordinate L-methionine. The segment at 98–108 (QSPDIALGVDK) is flexible loop. ATP is bound by residues 174–176 (DGK), 240–241 (RF), D249, 255–256 (RK), A272, and K276. D249 is an L-methionine binding site. K280 serves as a coordination point for L-methionine.

Belongs to the AdoMet synthase family. As to quaternary structure, homotetramer; dimer of dimers. Requires Mg(2+) as cofactor. It depends on K(+) as a cofactor.

The protein localises to the cytoplasm. The enzyme catalyses L-methionine + ATP + H2O = S-adenosyl-L-methionine + phosphate + diphosphate. The protein operates within amino-acid biosynthesis; S-adenosyl-L-methionine biosynthesis; S-adenosyl-L-methionine from L-methionine: step 1/1. Catalyzes the formation of S-adenosylmethionine (AdoMet) from methionine and ATP. The overall synthetic reaction is composed of two sequential steps, AdoMet formation and the subsequent tripolyphosphate hydrolysis which occurs prior to release of AdoMet from the enzyme. The chain is S-adenosylmethionine synthase from Thermotoga neapolitana (strain ATCC 49049 / DSM 4359 / NBRC 107923 / NS-E).